The primary structure comprises 416 residues: Enterobactin exporter EntS (416 aa).

Over 1-21 (MNKQSWLLNLSLLKTHPAFRA) the chain is Cytoplasmic. Residues 22 to 42 (VFLARFISIVSLGLLGVAVPV) traverse the membrane as a helical segment. The Periplasmic portion of the chain corresponds to 43–55 (QIQMMTHSTWQVG). The helical transmembrane segment at 56–76 (LSVTLTGGAMFVGLMVGGVLA) threads the bilayer. The Cytoplasmic segment spans residues 77–83 (DRYERKK). Residues 84–104 (VILLARGTCGIGFIGLCLNAL) form a helical membrane-spanning segment. Residues 105–109 (LPEPS) are Periplasmic-facing. The chain crosses the membrane as a helical span at residues 110-130 (LLAIYLLGLWDGFFASLGVTA). At 131–156 (LLAATPALVGRENLMQAGAITMLTVR) the chain is on the cytoplasmic side. A helical transmembrane segment spans residues 157-177 (LGSVISPMIGGLLLATGGVAW). Residue asparagine 178 is a topological domain, periplasmic. The chain crosses the membrane as a helical span at residues 179-199 (YGLAAAGTFITLLPLLSLPAL). Over 200–218 (PPPPQPREHPLKSLLAGFR) the chain is Cytoplasmic. Residues 219–239 (FLLASPLVGGIALLGGLLTMA) traverse the membrane as a helical segment. Residues 240–256 (SAVRVLYPALADNWQMS) are Periplasmic-facing. Residues 257–277 (AAQIGFLYAAIPLGAAIGALT) form a helical membrane-spanning segment. Residues 278-287 (SGKLAHSARP) lie on the Cytoplasmic side of the membrane. A helical transmembrane segment spans residues 288–307 (GLLMLLSTLGSFLAIGLFGL). The Periplasmic segment spans residues 308-313 (MPMWIL). Residues 314–336 (GVVCLALFGWLSAVSSLLQYTML) form a helical membrane-spanning segment. Topologically, residues 337-356 (QTQTPEAMLGRINGLWTAQN) are cytoplasmic. A helical membrane pass occupies residues 357 to 377 (VTGDAIGAALLGGLGAMMTPV). Alanine 378 is a topological domain (periplasmic). Residues 379–399 (SASASGFGLLIIGVLLLLVLV) traverse the membrane as a helical segment. Residues 400–416 (ELRHFRQTPPQVTASDS) are Cytoplasmic-facing.

The protein belongs to the major facilitator superfamily. EntS (TC 2.A.1.38) family.

It localises to the cell inner membrane. Its function is as follows. Component of an export pathway for enterobactin. This Escherichia coli (strain K12 / MC4100 / BW2952) protein is Enterobactin exporter EntS.